Consider the following 406-residue polypeptide: [Pyruvate dehydrogenase (acetyl-transferring)] kinase isozyme 3, mitochondrial (406 aa).

Positions 131–362 constitute a Histidine kinase domain; that stretch reads IEYKEKFGFD…DAVIYLKALS (232 aa). An ATP-binding site is contributed by 247 to 254; sequence ELFKNSMR. K278 is modified (N6-succinyllysine). ATP-binding positions include D287, 306–307, and 323–328; these read ST and GFGYGL. The interval 383–406 is disordered; it reads TPEADDWSNPSSEPRDASKYKAKQ. Over residues 395–406 the composition is skewed to basic and acidic residues; sequence EPRDASKYKAKQ.

It belongs to the PDK/BCKDK protein kinase family. As to quaternary structure, homodimer. Interacts with the pyruvate dehydrogenase complex subunit DLAT, and is part of the multimeric pyruvate dehydrogenase complex that contains multiple copies of pyruvate dehydrogenase (E1), dihydrolipoamide acetyltransferase (DLAT, E2) and lipoamide dehydrogenase (DLD, E3). In terms of tissue distribution, expressed in heart, skeletal muscle, spinal cord, as well as fetal and adult brain.

The protein localises to the mitochondrion matrix. The enzyme catalyses L-seryl-[pyruvate dehydrogenase E1 alpha subunit] + ATP = O-phospho-L-seryl-[pyruvate dehydrogenase E1 alpha subunit] + ADP + H(+). Activated by interaction with DLAT. Inhibited by AZD7545, dichloroacetate and radicicol. Inhibits pyruvate dehydrogenase activity by phosphorylation of the E1 subunit PDHA1, and thereby regulates glucose metabolism and aerobic respiration. Can also phosphorylate PDHA2. Decreases glucose utilization and increases fat metabolism in response to prolonged fasting, and as adaptation to a high-fat diet. Plays a role in glucose homeostasis and in maintaining normal blood glucose levels in function of nutrient levels and under starvation. Plays a role in the generation of reactive oxygen species. In Homo sapiens (Human), this protein is [Pyruvate dehydrogenase (acetyl-transferring)] kinase isozyme 3, mitochondrial (PDK3).